A 356-amino-acid chain; its full sequence is Acyl-coenzyme A diphosphatase NUDT19 (356 aa).

The 232-residue stretch at 10-241 (AATVMLAAGW…IWLAPPQFYE (232 aa)) folds into the Nudix hydrolase domain. The disordered stretch occupies residues 72-94 (PRFGLGPEPPRQPPFPGLSHGDA). A compositionally biased stretch (pro residues) spans 78–87 (PEPPRQPPFP). The short motif at 97–118 (AALPDDVALRICAIRETFEEAG) is the Nudix box element. The Mg(2+) site is built by glutamate 112 and glutamate 116. An N6-succinyllysine modification is found at lysine 299. A Microbody targeting signal motif is present at residues 354 to 356 (ARL).

This sequence belongs to the Nudix hydrolase family. Monomer. Mg(2+) serves as cofactor. Mn(2+) is required as a cofactor.

The protein resides in the peroxisome. It carries out the reaction an acyl-CoA + H2O = an acyl-4'-phosphopantetheine + adenosine 3',5'-bisphosphate + 2 H(+). The catalysed reaction is CoA + H2O = (R)-4'-phosphopantetheine + adenosine 3',5'-bisphosphate + 2 H(+). The enzyme catalyses hexanoyl-CoA + H2O = hexanoyl-4'-phosphopantetheine + adenosine 3',5'-bisphosphate + 2 H(+). It catalyses the reaction octanoyl-CoA + H2O = S-octanoyl-4'-phosphopantetheine + adenosine 3',5'-bisphosphate + 2 H(+). It carries out the reaction butanoyl-CoA + H2O = S-butanoyl-4'-phosphopantetheine + adenosine 3',5'-bisphosphate + 2 H(+). The catalysed reaction is propanoyl-CoA + H2O = propanoyl-4'-phosphopantetheine + adenosine 3',5'-bisphosphate + 2 H(+). The enzyme catalyses malonyl-CoA + H2O = malonyl-4'-phosphopantetheine + adenosine 3',5'-bisphosphate + 2 H(+). It catalyses the reaction succinyl-CoA + H2O = succinyl-4'-phosphopantetheine + adenosine 3',5'-bisphosphate + 2 H(+). It carries out the reaction choloyl-CoA + H2O = S-choloyl-4'-phosphopantetheine + adenosine 3',5'-bisphosphate + 2 H(+). The catalysed reaction is 4,8-dimethylnonanoyl-CoA + H2O = S-(4,8-dimethylnonanoyl)-4'-phosphopantetheine + adenosine 3',5'-bisphosphate + 2 H(+). The enzyme catalyses (9Z,12Z,15Z)-octadecatrienoyl-CoA + H2O = S-(9Z,12Z,15Z-octadecatrienoyl)-4'-phosphopantetheine + adenosine 3',5'-bisphosphate + 2 H(+). It catalyses the reaction (9Z,12Z)-octadecadienoyl-CoA + H2O = S-(9Z,12Z-octadecadienoyl)-4'-phosphopantetheine + adenosine 3',5'-bisphosphate + 2 H(+). It carries out the reaction (9Z)-hexadecenoyl-CoA + H2O = S-(9Z-hexadecenoyl)-4'-phosphopantetheine + adenosine 3',5'-bisphosphate + 2 H(+). The catalysed reaction is (9Z)-tetradecenoyl-CoA + H2O = S-(9Z-tetradecenoyl)-4'-phosphopantetheine + adenosine 3',5'-bisphosphate + 2 H(+). The enzyme catalyses (6Z)-octenoyl-CoA + H2O = S-(6Z-octenoyl)-4'-phosphopantetheine + adenosine 3',5'-bisphosphate + 2 H(+). It catalyses the reaction hexadecanoyl-CoA + H2O = S-hexadecanoyl-4'-phosphopantetheine + adenosine 3',5'-bisphosphate + 2 H(+). It carries out the reaction tetradecanoyl-CoA + H2O = tetradecanoyl-4'-phosphopantetheine + adenosine 3',5'-bisphosphate + 2 H(+). The catalysed reaction is dodecanoyl-CoA + H2O = S-dodecanoyl-4'-phosphopantetheine + adenosine 3',5'-bisphosphate + 2 H(+). The enzyme catalyses a 5'-end CoA-ribonucleoside in mRNA + H2O = a 5'-end phospho-adenosine-phospho-ribonucleoside in mRNA + (R)-4'-phosphopantetheine + 2 H(+). Fatty acyl-coenzyme A (CoA) diphosphatase that hydrolyzes fatty acyl-CoA to yield acyl-4'-phosphopantetheine and adenosine 3',5'-bisphosphate. Mediates the hydrolysis of a wide range of CoA esters, including choloyl-CoA and branched-chain fatty-acyl-CoA esters and at low substrate concentrations medium and long-chain fatty-acyl-CoA esters are the primary substrates. Highest activity seen with medium-chain acyl-CoA esters and higher rates of activity seen with the unsaturated acyl-CoA esters compared with the saturated esters. Exhibits decapping activity towards dpCoA-capped RNAs in vitro. This is Acyl-coenzyme A diphosphatase NUDT19 (Nudt19) from Mus saxicola (Brown spiny mouse).